Reading from the N-terminus, the 93-residue chain is Aspartyl/glutamyl-tRNA(Asn/Gln) amidotransferase subunit C (93 aa).

This sequence belongs to the GatC family. Heterotrimer of A, B and C subunits.

The catalysed reaction is L-glutamyl-tRNA(Gln) + L-glutamine + ATP + H2O = L-glutaminyl-tRNA(Gln) + L-glutamate + ADP + phosphate + H(+). The enzyme catalyses L-aspartyl-tRNA(Asn) + L-glutamine + ATP + H2O = L-asparaginyl-tRNA(Asn) + L-glutamate + ADP + phosphate + 2 H(+). Functionally, allows the formation of correctly charged Asn-tRNA(Asn) or Gln-tRNA(Gln) through the transamidation of misacylated Asp-tRNA(Asn) or Glu-tRNA(Gln) in organisms which lack either or both of asparaginyl-tRNA or glutaminyl-tRNA synthetases. The reaction takes place in the presence of glutamine and ATP through an activated phospho-Asp-tRNA(Asn) or phospho-Glu-tRNA(Gln). This chain is Aspartyl/glutamyl-tRNA(Asn/Gln) amidotransferase subunit C, found in Methanococcoides burtonii (strain DSM 6242 / NBRC 107633 / OCM 468 / ACE-M).